Here is a 172-residue protein sequence, read N- to C-terminus: uncharacterized protein (172 aa).

Transmembrane regions (helical) follow at residues 1–21 (MLFINITFACILAIRFYSLSI), 41–61 (NSTLLSIAHVAFYFAAIIEAN), 72–92 (QIGLAILIFAIAMLFYVIYEL), and 136–156 (FCQAKYTALVGLPIYLLILAV).

It is found in the cell membrane. This is an uncharacterized protein from Haemophilus influenzae (strain ATCC 51907 / DSM 11121 / KW20 / Rd).